The primary structure comprises 433 residues: MKQHLWPLFLEAIKRDVVPALGCTEPISVALAAAIAIGELGIKNQASNVKMDVSVSANLMKNGMGVGIPGTGMVGLPIAAAIGAVAGDSNAGLEVLKNLTDSDVQAAKLMLDNGQVTVGVADVANVLYAKVTVYYQQQTASVTIADSHTKVIAIEKNGEQCLPAPEVESVNDKSNKANPFTEARLQDIYDFAMHAPLDDIGFIMQSKSLNDALSIEGLSGHYGLKIGATLVKNQEKGLLSGGLLTEVLARTAGASDARMDGAMMPAMSNSGSGNQGIAATMPVVACAEFLKSSETQTIRALMLSHLTAIYIKSYQNKLSALCGATTAAMGSAAGITYLLDGEIEQVSAAICSMIGDVSGVICDGAKTACAMKVSSSAGAAVKSALMAIDGIRVTGTEGIVADDVDQTISNLATLANGAMTQTDVQILEIMMHK.

Belongs to the UPF0597 family.

The polypeptide is UPF0597 protein Spea_0809 (Shewanella pealeana (strain ATCC 700345 / ANG-SQ1)).